Consider the following 149-residue polypeptide: Large ribosomal subunit protein bL9 (149 aa).

The protein belongs to the bacterial ribosomal protein bL9 family.

Its function is as follows. Binds to the 23S rRNA. The polypeptide is Large ribosomal subunit protein bL9 (Teredinibacter turnerae (strain ATCC 39867 / T7901)).